We begin with the raw amino-acid sequence, 158 residues long: Small ribosomal subunit protein uS9 (158 aa).

The protein belongs to the universal ribosomal protein uS9 family.

The protein is Small ribosomal subunit protein uS9 of Brucella melitensis biotype 2 (strain ATCC 23457).